The following is a 147-amino-acid chain: Large ribosomal subunit protein uL13 (147 aa).

This sequence belongs to the universal ribosomal protein uL13 family. Part of the 50S ribosomal subunit.

Functionally, this protein is one of the early assembly proteins of the 50S ribosomal subunit, although it is not seen to bind rRNA by itself. It is important during the early stages of 50S assembly. The protein is Large ribosomal subunit protein uL13 of Corynebacterium diphtheriae (strain ATCC 700971 / NCTC 13129 / Biotype gravis).